Consider the following 310-residue polypeptide: Ribose-phosphate pyrophosphokinase (310 aa).

Residues 34–36 and 93–94 each bind ATP; these read DME and RQ. Positions 127 and 167 each coordinate Mg(2+). Residue Lys-190 is part of the active site. D-ribose 5-phosphate-binding positions include Arg-192, Asp-216, and 220 to 224; that span reads DSGGT.

The protein belongs to the ribose-phosphate pyrophosphokinase family. Class I subfamily. As to quaternary structure, homohexamer. It depends on Mg(2+) as a cofactor.

Its subcellular location is the cytoplasm. The catalysed reaction is D-ribose 5-phosphate + ATP = 5-phospho-alpha-D-ribose 1-diphosphate + AMP + H(+). It functions in the pathway metabolic intermediate biosynthesis; 5-phospho-alpha-D-ribose 1-diphosphate biosynthesis; 5-phospho-alpha-D-ribose 1-diphosphate from D-ribose 5-phosphate (route I): step 1/1. In terms of biological role, involved in the biosynthesis of the central metabolite phospho-alpha-D-ribosyl-1-pyrophosphate (PRPP) via the transfer of pyrophosphoryl group from ATP to 1-hydroxyl of ribose-5-phosphate (Rib-5-P). This Granulibacter bethesdensis (strain ATCC BAA-1260 / CGDNIH1) protein is Ribose-phosphate pyrophosphokinase.